The chain runs to 623 residues: MSTSSSDPFFNFAKSSFRSAAAQKASASSLPPLPGPDKKVPGMDIKYDVVIVGSGPIGCTYARELVGAGYKVAMFDIGEIDSGLKIGAHKKNTVEYQKNIDKFVNVIQGQLMSVSVPVNTLVVDTLSPTSWQASTFFVRNGSNPEQDPLRNLSGQAVTRVVGGMSTHWTCATPRFDREQRPLLVKDDADADDAEWDRLYTKAESYFQTGTDQFKESIRHNLVLNKLAEEYKGQRDFQQIPLAATRRSPTFVEWSSANTVFDLQNRPNTDAPEERFNLFPAVACERVVRNALNSEIESLHIHDLISGDRFEIKADVYVLTAGAVHNTQLLVNSGFGQLGRPNPTNPPELLPSLGSYITEQSLVFCQTVMSTELIDSVKSDMTIRGTPGELTYSVTYTPGASTNKHPDWWNEKVKNHMMQHQEDPLPIPFEDPEPQVTTLFQPSHPWHTQIHRDAFSYGAVQQSIDSRLIVDWRFFGRTEPKEENKLWFSDKITDAYNMPQPTFDFRFPAGRTSKEAEDMMTDMCVMSAKIGGFLPGSLPQFMEPGLVLHLGGTHRMGFDEKEDNCCVNTDSRVFGFKNLFLGGCGNIPTAYGANPTLTAMSLAIKSCEYIKQNFTPSPFTSEAQ.

A signal peptide spans 1–28 (MSTSSSDPFFNFAKSSFRSAAAQKASAS). The propeptide occupies 29 to 38 (SLPPLPGPDK). Position 167 is a tele-8alpha-FAD histidine (His167). Substrate is bound by residues Gln448 and His450. The Proton acceptor role is filled by His548. Asn593 is an active-site residue.

The protein belongs to the GMC oxidoreductase family. In terms of assembly, homotetramer. The cofactor is FAD.

Its subcellular location is the periplasm. The catalysed reaction is D-glucose + O2 = 2-dehydro-D-glucose + H2O2. Its function is as follows. Catalyzes the oxidation of various aldopyranoses and disaccharides on carbon-2 to the corresponding 2-keto sugars concomitant with the reduction of O(2) to H(2)O(2). Plays an important role in lignin degradation of wood rot fungi by supplying the essential cosubstrate H(2)O(2) for the ligninolytic peroxidases, lignin peroxidase and manganese-dependent peroxidase. In Peniophora sp. (strain SG) (White-rot fungus), this protein is Pyranose 2-oxidase (p2ox).